We begin with the raw amino-acid sequence, 562 residues long: 3-(3-hydroxy-phenyl)propionate/3-hydroxycinnamic acid hydroxylase (562 aa).

FAD is bound by residues 8–37 (DVVIVGAGPVGLTLANILGGQGVRTLIIEE) and 275–285 (FRKGRMLLAGD).

It belongs to the PheA/TfdB FAD monooxygenase family. FAD serves as cofactor.

It carries out the reaction 3-(3-hydroxyphenyl)propanoate + NADH + O2 + H(+) = 3-(2,3-dihydroxyphenyl)propanoate + NAD(+) + H2O. The enzyme catalyses (2E)-3-(3-hydroxyphenyl)prop-2-enoate + NADH + O2 + H(+) = (2E)-3-(2,3-dihydroxyphenyl)prop-2-enoate + NAD(+) + H2O. Its pathway is aromatic compound metabolism; 3-phenylpropanoate degradation. Its function is as follows. Catalyzes the insertion of one atom of molecular oxygen into position 2 of the phenyl ring of 3-(3-hydroxyphenyl)propionate (3-HPP) and hydroxycinnamic acid (3HCI). This chain is 3-(3-hydroxy-phenyl)propionate/3-hydroxycinnamic acid hydroxylase, found in Mycolicibacterium smegmatis (strain ATCC 700084 / mc(2)155) (Mycobacterium smegmatis).